The sequence spans 518 residues: Bifunctional purine biosynthesis protein PurH (518 aa).

The MGS-like domain maps to 1-146 (MGRMALLSTS…KNHAHVTVLV (146 aa)).

It belongs to the PurH family.

It catalyses the reaction (6R)-10-formyltetrahydrofolate + 5-amino-1-(5-phospho-beta-D-ribosyl)imidazole-4-carboxamide = 5-formamido-1-(5-phospho-D-ribosyl)imidazole-4-carboxamide + (6S)-5,6,7,8-tetrahydrofolate. The catalysed reaction is IMP + H2O = 5-formamido-1-(5-phospho-D-ribosyl)imidazole-4-carboxamide. Its pathway is purine metabolism; IMP biosynthesis via de novo pathway; 5-formamido-1-(5-phospho-D-ribosyl)imidazole-4-carboxamide from 5-amino-1-(5-phospho-D-ribosyl)imidazole-4-carboxamide (10-formyl THF route): step 1/1. It participates in purine metabolism; IMP biosynthesis via de novo pathway; IMP from 5-formamido-1-(5-phospho-D-ribosyl)imidazole-4-carboxamide: step 1/1. The chain is Bifunctional purine biosynthesis protein PurH from Thermosynechococcus vestitus (strain NIES-2133 / IAM M-273 / BP-1).